The primary structure comprises 87 residues: Phosphoribosyl-ATP pyrophosphatase (87 aa).

It belongs to the PRA-PH family.

It is found in the cytoplasm. The enzyme catalyses 1-(5-phospho-beta-D-ribosyl)-ATP + H2O = 1-(5-phospho-beta-D-ribosyl)-5'-AMP + diphosphate + H(+). It functions in the pathway amino-acid biosynthesis; L-histidine biosynthesis; L-histidine from 5-phospho-alpha-D-ribose 1-diphosphate: step 2/9. This chain is Phosphoribosyl-ATP pyrophosphatase, found in Bifidobacterium adolescentis (strain ATCC 15703 / DSM 20083 / NCTC 11814 / E194a).